The primary structure comprises 77 residues: Translation initiation factor IF-1, chloroplastic (77 aa).

One can recognise an S1-like domain in the interval 1–72 (MKKQNLIEME…TKGRITYRLR (72 aa)).

Belongs to the IF-1 family. Component of the 30S ribosomal translation pre-initiation complex which assembles on the 30S ribosome in the order IF-2 and IF-3, IF-1 and N-formylmethionyl-tRNA(fMet); mRNA recruitment can occur at any time during PIC assembly.

The protein localises to the plastid. It is found in the chloroplast. Its function is as follows. One of the essential components for the initiation of protein synthesis. Stabilizes the binding of IF-2 and IF-3 on the 30S subunit to which N-formylmethionyl-tRNA(fMet) subsequently binds. Helps modulate mRNA selection, yielding the 30S pre-initiation complex (PIC). Upon addition of the 50S ribosomal subunit IF-1, IF-2 and IF-3 are released leaving the mature 70S translation initiation complex. The polypeptide is Translation initiation factor IF-1, chloroplastic (Zygnema circumcarinatum (Green alga)).